A 203-amino-acid polypeptide reads, in one-letter code: Transcriptional regulator GfcR 2 (203 aa).

It belongs to the purine/pyrimidine phosphoribosyltransferase family. GfcR subfamily.

The polypeptide is Transcriptional regulator GfcR 2 (Methanosarcina acetivorans (strain ATCC 35395 / DSM 2834 / JCM 12185 / C2A)).